A 183-amino-acid polypeptide reads, in one-letter code: Probable RNA 2'-phosphotransferase (183 aa).

The protein belongs to the KptA/TPT1 family.

Its function is as follows. Removes the 2'-phosphate from RNA via an intermediate in which the phosphate is ADP-ribosylated by NAD followed by a presumed transesterification to release the RNA and generate ADP-ribose 1''-2''-cyclic phosphate (APPR&gt;P). May function as an ADP-ribosylase. This Clostridium perfringens (strain 13 / Type A) protein is Probable RNA 2'-phosphotransferase.